The sequence spans 301 residues: NADH-ubiquinone oxidoreductase chain 1 (301 aa).

8 helical membrane-spanning segments follow: residues 4–24 (IIPILLAVAFLTLLERKVLGY), 62–82 (LALFIIAPTLALTLALMMWIP), 96–116 (ILFMLALSSLAVYAILWSGWA), 140–160 (LAIIILSILLMNGSFTLSTLI), 165–185 (YTWLIMPSWPLAMMWFISTIA), 216–236 (LFFLAEYANIIMMNALTIILF), 247–267 (EMYTANFMLKALLFTTFFLWI), and 279–299 (LMHLLWKNFLPLTLVMCMWHV).

The protein belongs to the complex I subunit 1 family.

Its subcellular location is the mitochondrion inner membrane. The enzyme catalyses a ubiquinone + NADH + 5 H(+)(in) = a ubiquinol + NAD(+) + 4 H(+)(out). Functionally, core subunit of the mitochondrial membrane respiratory chain NADH dehydrogenase (Complex I) that is believed to belong to the minimal assembly required for catalysis. Complex I functions in the transfer of electrons from NADH to the respiratory chain. The immediate electron acceptor for the enzyme is believed to be ubiquinone. In Nyctalus noctula (Noctule bat), this protein is NADH-ubiquinone oxidoreductase chain 1 (MT-ND1).